The sequence spans 434 residues: Histidinol dehydrogenase (434 aa).

NAD(+) contacts are provided by tyrosine 130, glutamine 188, and asparagine 211. 3 residues coordinate substrate: serine 237, glutamine 259, and histidine 262. Residues glutamine 259 and histidine 262 each contribute to the Zn(2+) site. Active-site proton acceptor residues include glutamate 326 and histidine 327. Substrate is bound by residues histidine 327, aspartate 360, glutamate 414, and histidine 419. Aspartate 360 lines the Zn(2+) pocket. Position 419 (histidine 419) interacts with Zn(2+).

This sequence belongs to the histidinol dehydrogenase family. In terms of assembly, homodimer. Requires Zn(2+) as cofactor.

It catalyses the reaction L-histidinol + 2 NAD(+) + H2O = L-histidine + 2 NADH + 3 H(+). It functions in the pathway amino-acid biosynthesis; L-histidine biosynthesis; L-histidine from 5-phospho-alpha-D-ribose 1-diphosphate: step 9/9. Functionally, catalyzes the sequential NAD-dependent oxidations of L-histidinol to L-histidinaldehyde and then to L-histidine. This chain is Histidinol dehydrogenase, found in Salmonella typhi.